We begin with the raw amino-acid sequence, 208 residues long: Probable hydrolase YcaC (208 aa).

Cys118 is a catalytic residue.

As to quaternary structure, homooctamer composed of two tetrameric rings.

In Escherichia coli (strain K12), this protein is Probable hydrolase YcaC (ycaC).